A 635-amino-acid chain; its full sequence is Threonine--tRNA ligase (635 aa).

A TGS domain is found at methionine 1–threonine 58. The tract at residues aspartate 237–proline 528 is catalytic. The Zn(2+) site is built by cysteine 328, histidine 379, and histidine 505.

It belongs to the class-II aminoacyl-tRNA synthetase family. As to quaternary structure, homodimer. The cofactor is Zn(2+).

The protein resides in the cytoplasm. The enzyme catalyses tRNA(Thr) + L-threonine + ATP = L-threonyl-tRNA(Thr) + AMP + diphosphate + H(+). Catalyzes the attachment of threonine to tRNA(Thr) in a two-step reaction: L-threonine is first activated by ATP to form Thr-AMP and then transferred to the acceptor end of tRNA(Thr). Also edits incorrectly charged L-seryl-tRNA(Thr). This Chlamydia caviae (strain ATCC VR-813 / DSM 19441 / 03DC25 / GPIC) (Chlamydophila caviae) protein is Threonine--tRNA ligase.